The sequence spans 339 residues: MSEERTAWGWGLASVDAAGTTLDVWYPELNLGEAPAESDRPNHNFGTLAHDEADARGIRRVPVFVVSQLDEPISNAADAYLKLHLMSMRMAKPNTLNLDGIFAQLANVVWTNYGPFAVEDFTLRKADVERASTEAALAFASQAGLPAAAPAATVNVFGVDKFPRMIDYVVPTGVRLGDADRVRLGAYLSSGTTVMHAGFVNFNAGTLGVSMVEGRVSQGVVVGDGSDIGGGASIMGTLSGGGKLRNSIGEHSLLGANAGIGISLGDNCTVEAGLYITAGTKITIWDKAKAAAGEPLEVVKGAELSGKDNILFIRNSVNGRIEARYRKVGIELNAKLHKN.

Residue Asp180 participates in Mg(2+) binding. The active-site Acyl-anhydride intermediate is the Glu213. Residues Arg215, Gly230, Ser233, Ala256, 271-272, Gly279, and Lys300 each bind succinyl-CoA; that span reads EA.

It belongs to the type 2 tetrahydrodipicolinate N-succinyltransferase family. Homotrimer.

The protein localises to the cytoplasm. The catalysed reaction is (S)-2,3,4,5-tetrahydrodipicolinate + succinyl-CoA + H2O = (S)-2-succinylamino-6-oxoheptanedioate + CoA. It participates in amino-acid biosynthesis; L-lysine biosynthesis via DAP pathway; LL-2,6-diaminopimelate from (S)-tetrahydrodipicolinate (succinylase route): step 1/3. Catalyzes the conversion of the cyclic tetrahydrodipicolinate (THDP) into the acyclic N-succinyl-L-2-amino-6-oxopimelate using succinyl-CoA. The sequence is that of 2,3,4,5-tetrahydropyridine-2,6-dicarboxylate N-succinyltransferase from Bifidobacterium longum (strain NCC 2705).